Here is a 260-residue protein sequence, read N- to C-terminus: UPF0294 protein YPO1077/y3099/YP_2772 (260 aa).

It belongs to the UPF0294 family.

It localises to the cytoplasm. The sequence is that of UPF0294 protein YPO1077/y3099/YP_2772 from Yersinia pestis.